Reading from the N-terminus, the 107-residue chain is UPF0060 membrane protein Atu1058 (107 aa).

Helical transmembrane passes span 5–25 (LIYV…WAWL), 32–52 (WILL…TLVA), 59–79 (AYAA…WGVE), and 85–105 (RWDI…LFGP).

It belongs to the UPF0060 family.

Its subcellular location is the cell inner membrane. The polypeptide is UPF0060 membrane protein Atu1058 (Agrobacterium fabrum (strain C58 / ATCC 33970) (Agrobacterium tumefaciens (strain C58))).